The chain runs to 950 residues: Protocadherin alpha-6 (950 aa).

The first 29 residues, 1–29 (MVFTPEDRLGKQCLLLPLLLLAAWKVGSG), serve as a signal peptide directing secretion. The Extracellular segment spans residues 30–697 (QLHYSVPEEA…GPEAALVDVN (668 aa)). Cadherin domains are found at residues 34 to 133 (SVPE…PPLF), 157 to 242 (ASDA…APTF), 243 to 350 (EQSE…VPEI), 351 to 455 (ALTS…APAF), 456 to 565 (AQPE…APAL), and 581 to 678 (VPRS…APKA). N-linked (GlcNAc...) asparagine glycans are attached at residues asparagine 257, asparagine 265, asparagine 386, and asparagine 548. The chain crosses the membrane as a helical span at residues 698 to 718 (VYLIIAICAVSSLLVLTLLLY). Residues 719–950 (TALRCSAPPT…GNSTTDNSDQ (232 aa)) lie on the Cytoplasmic side of the membrane. PXXP repeat units follow at residues 799–802 (PRQP), 832–835 (PGGP), 873–876 (PGNP), and 891–894 (PGSP). Residues 799–894 (PRQPNPDWRY…PDKFIIPGSP (96 aa)) form a 4 X 4 AA repeats of P-X-X-P region. The interval 830-950 (AGPGGPDQQW…GNSTTDNSDQ (121 aa)) is disordered. The span at 909-923 (DKSDFITFGKKEETK) shows a compositional bias: basic and acidic residues.

It is found in the cell membrane. The protein resides in the secreted. Functionally, potential calcium-dependent cell-adhesion protein. May be involved in the establishment and maintenance of specific neuronal connections in the brain. The protein is Protocadherin alpha-6 (PCDHA6) of Homo sapiens (Human).